Here is a 544-residue protein sequence, read N- to C-terminus: Chaperonin GroEL 2 (544 aa).

Residues 29 to 32 (TLGP), 86 to 90 (DGTTT), glycine 413, 482 to 484 (NVL), and aspartate 498 each bind ATP.

The protein belongs to the chaperonin (HSP60) family. In terms of assembly, forms a cylinder of 14 subunits composed of two heptameric rings stacked back-to-back. Interacts with the co-chaperonin GroES.

It is found in the cytoplasm. The enzyme catalyses ATP + H2O + a folded polypeptide = ADP + phosphate + an unfolded polypeptide.. Its function is as follows. Together with its co-chaperonin GroES, plays an essential role in assisting protein folding. The GroEL-GroES system forms a nano-cage that allows encapsulation of the non-native substrate proteins and provides a physical environment optimized to promote and accelerate protein folding. This chain is Chaperonin GroEL 2, found in Roseiflexus sp. (strain RS-1).